The chain runs to 361 residues: Thymidine kinase (361 aa).

ATP is bound at residue G17–S24. E46 (proton acceptor) is an active-site residue. Substrate-binding residues include Y64 and Q88. R184 contacts ATP. R190 contacts substrate.

It belongs to the herpesviridae thymidine kinase family. As to quaternary structure, homodimer.

It carries out the reaction thymidine + ATP = dTMP + ADP + H(+). Functionally, catalyzes the transfer of the gamma-phospho group of ATP to thymidine to generate dTMP in the salvage pathway of pyrimidine synthesis. The dTMP serves as a substrate for DNA polymerase during viral DNA replication. Allows the virus to be reactivated and to grow in non-proliferative cells lacking a high concentration of phosphorylated nucleic acid precursors. The sequence is that of Thymidine kinase from Saimiriine herpesvirus 1 (strain MV-5-4-PSL) (SaHV-1).